The chain runs to 219 residues: Ras-related protein RABA5d (219 aa).

An N-acetylserine modification is found at S2. Residue 19 to 26 (GDSAVGKS) participates in GTP binding. Positions 41 to 49 (SKATIGVEF) match the Effector region motif. Residues 67-71 (DTAGQ), 125-128 (NKCD), and 155-156 (SA) each bind GTP. S-geranylgeranyl cysteine attachment occurs at residues C215 and C216.

The protein belongs to the small GTPase superfamily. Rab family.

Its subcellular location is the cell membrane. Intracellular vesicle trafficking and protein transport. This chain is Ras-related protein RABA5d (RABA5D), found in Arabidopsis thaliana (Mouse-ear cress).